The sequence spans 302 residues: Probable alpha-L-glutamate ligase (302 aa).

Residues 112–294 enclose the ATP-grasp domain; sequence LQLLLKTGVP…IAAEIIDYIE (183 aa). Residues Lys-148, 185-186, Asp-194, and 218-220 each bind ATP; these read DF and RAN. The Mg(2+) site is built by Asp-255, Glu-267, and Asn-269. Mn(2+)-binding residues include Asp-255, Glu-267, and Asn-269.

It belongs to the RimK family. The cofactor is Mg(2+). Mn(2+) is required as a cofactor.

In Haemophilus influenzae (strain 86-028NP), this protein is Probable alpha-L-glutamate ligase.